A 520-amino-acid chain; its full sequence is Nonsense-mediated mRNA decay factor SMG9 (520 aa).

Disordered stretches follow at residues 1–94 and 107–143; these read MSES…PAPL and GKGP…QRPT. Ser-2 is modified (N-acetylserine). Phosphoserine occurs at positions 2, 4, 7, 32, and 53. Basic and acidic residues predominate over residues 36–53; that stretch reads GRERDYIAPWERERRDGS. A compositionally biased stretch (pro residues) spans 78–94; the sequence is QPPPSTAPAAPPAPAPL. Residues 112 to 121 show a composition bias toward low complexity; it reads AATGASTPEG. A compositionally biased stretch (pro residues) spans 122-133; that stretch reads TAPPPPTAPAPP. Ser-451 bears the Phosphoserine mark.

It belongs to the SMG9 family. Self-associates to form homodimers and forms heterodimers with SMG8; these assembly forms may represent SMG1C intermediate forms. Component of the SMG1C complex composed of SMG1, SMG8 and SMG9. Interacts with DHX34; the interaction is RNA-independent. Post-translationally, phosphorylated by SMG1.

In terms of biological role, involved in nonsense-mediated decay (NMD) of mRNAs containing premature stop codons. Is recruited by release factors to stalled ribosomes together with SMG1 and SMG8 (forming the SMG1C protein kinase complex) and, in the SMG1C complex, is required for the efficient association between SMG1 and SMG8. Plays a role in brain, heart, and eye development. The polypeptide is Nonsense-mediated mRNA decay factor SMG9 (Rattus norvegicus (Rat)).